The sequence spans 70 residues: Delta-hexatoxin-Mg1b (70 aa).

The N-terminal stretch at M1 to R26 is a signal peptide. 4 cysteine pairs are disulfide-bonded: C27-C41, C34-C46, C40-C57, and C42-C68.

Expressed by the venom gland.

It is found in the secreted. Inhibits tetrodotoxin-sensitive sodium channels (Nav). Intracranial injection into mice causes strong convulsions and death. Intrathorax injection into crickets causes paralysis prolonged for 2 minutes, followed by recovery. The polypeptide is Delta-hexatoxin-Mg1b (Macrothele gigas (Japanese funnel web spider)).